Here is a 663-residue protein sequence, read N- to C-terminus: MDAGERIRELADRIVELRTAYYEGAPLVADAEYDAVEDELRALIAAHPELAPDPNPLDQVGAPAVLHAPVRHSRPMLSLEKATTPEQVAAFFERFPGQPVVVMPKLDGLSLALVYEDGRLVRAVTRGDGTTGDDVTMLVRALVDGVPEQIDVPGRVEVRGEAVMLRSTFLAYNAAHPDKPLINPRNAAAGTLRAKDPATVAERRLRFFGFDLDTAEGGAAADLGEGLRALGIAGAAMRMCADAEQAQAAITDIERGRNDLDYDIDGAVLRLADRDAYAAAGTRSNSPRGALAFKFAAEEKTTVLEAVTWDVGKTGKIVPVARLEPVFVGGTTVTKATLANQQVIRARDIKVGDTVLVRRAGDVIPFVAGVLDASKRTGAEVEIVPPTECPSCGQPVTEQGNSRELFCTNASCPAQTVRRLIHWASRAAADIDAIGGVWIERLAEAGILENPSDFYTLTKERLLEFDRIGEVSATRMIESIDRSRDVGLRRALIGLAIPMASEGTAARLARAGFASLEEVADAGEERLVAVEDIGPKVAASLVEHLTRLRPELERLRERGVSLDVREEDLPPVVAAGAPLAGKTVVVTGAISDPRSGEKVARPTFQRLCEKAGATAASSVSANTDLLITGAGVGESKLAKAEKLGVEIVDQATIWAQLIEAKLV.

NAD(+)-binding positions include 30–34 (DAEYD) and 78–79 (SL). The active-site N6-AMP-lysine intermediate is lysine 105. NAD(+)-binding residues include arginine 126, glutamate 161, and lysine 294. Cysteine 389, cysteine 392, cysteine 407, and cysteine 412 together coordinate Zn(2+). The BRCT domain occupies 574–663 (AAGAPLAGKT…WAQLIEAKLV (90 aa)).

This sequence belongs to the NAD-dependent DNA ligase family. LigA subfamily. Mg(2+) serves as cofactor. Requires Mn(2+) as cofactor.

The enzyme catalyses NAD(+) + (deoxyribonucleotide)n-3'-hydroxyl + 5'-phospho-(deoxyribonucleotide)m = (deoxyribonucleotide)n+m + AMP + beta-nicotinamide D-nucleotide.. In terms of biological role, DNA ligase that catalyzes the formation of phosphodiester linkages between 5'-phosphoryl and 3'-hydroxyl groups in double-stranded DNA using NAD as a coenzyme and as the energy source for the reaction. It is essential for DNA replication and repair of damaged DNA. This Nocardia farcinica (strain IFM 10152) protein is DNA ligase 1.